Consider the following 122-residue polypeptide: uncharacterized protein (122 aa).

The signal sequence occupies residues 1-22 (MNMMRIFYIGLSGVGMMFSSMA).

This is an uncharacterized protein from Escherichia coli (strain K12).